We begin with the raw amino-acid sequence, 406 residues long: Oligouridylate-binding protein 1 (406 aa).

2 consecutive RRM domains span residues 49-123 (RSVY…WAYA) and 134-212 (YNIF…WAAK). Residues 231–250 (TSGTSDDGQEKVVNEDAPEN) form a disordered region. An RRM 3 domain is found at 255 to 329 (TTVYVGNLAP…KPVKCSWGSK (75 aa)).

It localises to the nucleus. Functionally, heterogeneous nuclear ribonucleoprotein (hnRNP)-like protein that acts as a component of the pre-mRNA processing machinery. Functions to facilitate the nuclear maturation of plant pre-mRNAs. Binds with high affinity to RNA molecules that contain AU-rich regions. May bind to the 3'-UTR and protects the mRNA against exonucleolytic degradation. Associates with nuclear poly(A)+ RNA in nucleus in vivo. Does not stimulate transcription or the 3' end cleavage/polyadenylation reaction. The protein is Oligouridylate-binding protein 1 (UBP1) of Nicotiana plumbaginifolia (Leadwort-leaved tobacco).